A 192-amino-acid chain; its full sequence is Spermatogenesis-associated protein 3 (192 aa).

Over residues 1 to 15 (MKKVKKKRSEARRHR) the composition is skewed to basic residues. Disordered stretches follow at residues 1 to 65 (MKKV…TTSR) and 161 to 184 (SRKPSSHRNACPPSPRNCGCGSGG). The segment covering 19–59 (SQHASSNSTSQQPSPESTPQQPSPESTPQQPSPESTPQHSS) has biased composition (low complexity).

Its subcellular location is the cell projection. The protein localises to the cilium. It is found in the flagellum. This chain is Spermatogenesis-associated protein 3 (SPATA3), found in Homo sapiens (Human).